A 1138-amino-acid chain; its full sequence is Solute carrier family 12 member 5 (1138 aa).

Disordered stretches follow at residues 1-62 and 96-116; these read MSRR…KGRE and QGSR…KPVQ. Residues 1–98 lie on the Cytoplasmic side of the membrane; sequence MSRRFTVTSL…ANYTNLPQGS (98 aa). Positions 21 to 45 are enriched in basic and acidic residues; sequence PESRRHSVADPRRLPREDVKGDGNP. Polar residues predominate over residues 46–55; the sequence is KESSPFINST. Threonine 57 is modified (phosphothreonine). Over residues 98–111 the composition is skewed to basic and acidic residues; sequence SREHEEAENNEGGK. Residues 99-120 traverse the membrane as a discontinuously helical segment; sequence REHEEAENNEGGKKKPVQAPRM. Lysine 113 contributes to the K(+) binding site. Topologically, residues 121–129 are extracellular; it reads GTFMGVYLP. A helical membrane pass occupies residues 130-151; it reads CLQNIFGVILFLRLTWVVGIAG. Over 152-174 the chain is Cytoplasmic; it reads IMESFCMVFICCSCTMLTAISMS. Residues 175–203 traverse the membrane as a helical segment; sequence AIATNGVVPAGGSYYMISRSLGPEFGGAV. Alanine 184 provides a ligand contact to chloride. Residues 204-229 are Extracellular-facing; that stretch reads GLCFYLGTTFAGAMYILGTIEILLAY. 2 helical membrane passes run 230-250 and 251-276; these read LFPA…AAML and NNMR…KYVN. Residues 277 to 402 lie on the Extracellular side of the membrane; sequence KFALVFLGCV…ERRGMPSVGL (126 aa). A disulfide bridge connects residues cysteine 310 and cysteine 325. N-linked (GlcNAc...) asparagine glycans are attached at residues asparagine 314, asparagine 333, asparagine 351, and asparagine 362. The cysteines at positions 345 and 354 are disulfide-linked. The chain crosses the membrane as a helical span at residues 403–420; it reads ADGTPVDMDHPYVFSDMT. Position 410 (methionine 410) interacts with K(+). Tyrosine 414 and valine 415 together coordinate chloride. Residues 421–429 lie on the Cytoplasmic side of the membrane; it reads SYFTLLVGI. Residues 430–453 form a helical membrane-spanning segment; sequence YFPSVTGIMAGSNRSGDLRDAQKS. Aspartate 446 provides a ligand contact to K(+). Topologically, residues 454–485 are extracellular; that stretch reads IPTGTILAIATTSAVYISSVVLFGACIEGVVL. The helical transmembrane segment at 486–513 threads the bilayer; sequence RDKFGEAVNGNLVVGTLAWPSPWVIVIG. Topologically, residues 514–534 are cytoplasmic; sequence SFFSTCGAGLQSLTGAPRLLQ. A run of 2 helical transmembrane segments spans residues 535–555 and 556–578; these read AISR…KANG and EPTW…ASLD. Glutamate 569 contributes to the chloride binding site. The Cytoplasmic portion of the chain corresponds to 579-592; the sequence is EVAPILSMFFLMCY. 2 helical membrane-spanning segments follow: residues 593–615 and 616–632; these read MFVN…PRFR and YYHW…CLAL. The Cytoplasmic portion of the chain corresponds to 633–1138; sequence MFICSWYYAL…GGREVITIYS (506 aa). The scissor helix stretch occupies residues 667-681; sequence GIRGLSLSAARYALL. At threonine 929 the chain carries Phosphothreonine; by OXSR1 and STK39. Residues 943-1051 form a disordered region; the sequence is HLTKNERERE…GPSPVSSEGI (109 aa). Over residues 945-962 the composition is skewed to basic and acidic residues; that stretch reads TKNEREREIQSITDESRG. Acidic residues predominate over residues 982–994; it reads TACDNEEKPEEEV. The span at 1001–1012 shows a compositional bias: low complexity; that stretch reads SAPSCPSSSPSP. Basic and acidic residues predominate over residues 1019–1041; the sequence is ERETDPEVHLTWTKDKSVAEKNK. At threonine 1029 the chain carries Phosphothreonine; by OXSR1 and STK39. Phosphoserine occurs at positions 1044, 1047, and 1048.

Belongs to the SLC12A transporter family. K/Cl co-transporter subfamily. In terms of assembly, homodimer; adopts a domain-swap conformation at the scissor helices connecting the transmembrane domain and C-terminal domain. Heterodimer with K-Cl cotransporters SLC12A6 and SLC12A7. Interacts with AP2A1. Phosphorylated at Thr-929 and Thr-1029 by OXSR1/OSR1 and STK39/SPAK downstream of WNK kinases (WNK1, WNK2, WNK3 or WNK4), inhibiting the potassium-chloride cotransport activity. As to expression, expressed in brainstem, spinal cord and olfactory bulb of 17 dpc embryos. Expressed in all parts of the brain and spinal cord in postnatal day 14 mice. In terms of tissue distribution, expressed in brainstem and spinal cord of 17 dpc embryos. Expressed in all parts of the brain and spinal cord in postnatal day 14 mice.

The protein localises to the cell membrane. It localises to the cell projection. The protein resides in the dendrite. It carries out the reaction K(+)(in) + chloride(in) = K(+)(out) + chloride(out). Its activity is regulated as follows. Inhibited following phosphorylation by OXSR1/OSR1 and STK39/SPAK: phosphorylation takes place downstream of WNK kinases (WNK1, WNK2, WNK3 or WNK4) in response to hyperosmotic stress and subsequent cell shrinkage. Mediates electroneutral potassium-chloride cotransport in mature neurons and is required for neuronal Cl(-) homeostasis. As major extruder of intracellular chloride, it establishes the low neuronal Cl(-) levels required for chloride influx after binding of GABA-A and glycine to their receptors, with subsequent hyperpolarization and neuronal inhibition. Involved in the regulation of dendritic spine formation and maturation. This Mus musculus (Mouse) protein is Solute carrier family 12 member 5 (Slc12a5).